The chain runs to 143 residues: Fido domain-containing protein DDB_G0283145 (143 aa).

Residues 1–128 (MKGIIVSDGV…TSHLALIILN (128 aa)) enclose the Fido domain. A helical transmembrane segment spans residues 49–69 (SSPYAVAAWLLHAFVSIHPFI).

It localises to the membrane. This chain is Fido domain-containing protein DDB_G0283145, found in Dictyostelium discoideum (Social amoeba).